The following is a 972-amino-acid chain: MADRLIVKGAREHNLRSVDLDLPRDALIVFTGLSGSGKSSLAFDTIFAEGQRRYVESLSAYARQFLGQMDKPDVDFIEGLSPAVSIDQKSTNRNPRSTVGTITEVYDYLRLLYARAGTPHCPTCGERVARQTPQQIVDQVLAMPEGTRFLVLAPVVRTRKGEFADLFDKLNAQGYSRVRVDGVVHPLTDPPKLKKQEKHDIEVVVDRLTVKAAAKRRLTDSVETALNLADGIVVLEFVDHELGAPHREQRFSEKLACPNGHALAVDDLEPRSFSFNSPYGACPECSGLGIRKEVDPELVVPDPDRTLAQGAVAPWSNGHTAEYFTRMMAGLGEALGFDVDTPWRKLPAKARKAILEGADEQVHVRYRNRYGRTRSYYADFEGVLAFLQRKMSQTESEQMKERYEGFMRDVPCPVCAGTRLKPEILAVTLAGESKGEHGAKSIAEVCELSIADCADFLNALTLGPREQAIAGQVLKEIRSRLGFLLDVGLEYLSLSRAAATLSGGEAQRIRLATQIGSGLVGVLYVLDEPSIGLHQRDNRRLIETLTRLRDLGNTLIVVEHDEDTIEHADWIVDIGPGAGEHGGRIVHSGPYDELLRNKDSITGAYLSGRESIEIPAIRRSVDPRRQLTVVGAREHNLRGIDVSFPLGVLTSVTGVSGSGKSTLVNDILAAVLANRLNGARQVPGRHTRVTGLDYLDKLVRVDQSPIGRTPRSNPATYTGVFDKIRTLFAATTEAKVRGYQPGRFSFNVKGGRCEACTGDGTIKIEMNFLPDVYVPCEVCQGARYNRETLEVHYKGKTVSEVLDMSIEEAAEFFEPIAGVHRYLRTLVDVGLGYVRLGQPAPTLSGGEAQRVKLASELQKRSTGRTVYILDEPTTGLHFDDIRKLLNVINGLVDKGNTVIVIEHNLDVIKTSDWIIDLGPEGGAGGGTVVAQGTPEDVAAVPASYTGKFLAEVVGGGASAATSRSNRRRNVSA.

32-39 contacts ATP; that stretch reads GLSGSGKS. A C4-type; atypical zinc finger spans residues 257 to 285; the sequence is CPNGHALAVDDLEPRSFSFNSPYGACPEC. 2 consecutive ABC transporter domains span residues 315–601 and 621–950; these read WSNG…KDSI and VDPR…KFLA. 654–661 provides a ligand contact to ATP; the sequence is GVSGSGKS. The segment at 753–779 adopts a C4-type zinc-finger fold; it reads CEACTGDGTIKIEMNFLPDVYVPCEVC.

Belongs to the ABC transporter superfamily. UvrA family. In terms of assembly, forms a heterotetramer with UvrB during the search for lesions.

It localises to the cytoplasm. Functionally, the UvrABC repair system catalyzes the recognition and processing of DNA lesions. UvrA is an ATPase and a DNA-binding protein. A damage recognition complex composed of 2 UvrA and 2 UvrB subunits scans DNA for abnormalities. When the presence of a lesion has been verified by UvrB, the UvrA molecules dissociate. In Mycobacterium bovis (strain ATCC BAA-935 / AF2122/97), this protein is UvrABC system protein A.